The sequence spans 244 residues: CTD nuclear envelope phosphatase 1 (244 aa).

The helical transmembrane segment at 7–29 threads the bilayer; the sequence is LLGLRGFVAFAAKLWSFVLYLLR. Positions 57–224 constitute an FCP1 homology domain; that stretch reads SQVKRKVLVL…LNLLPMLDAL (168 aa).

It belongs to the dullard family. Interacts with bmpr1a, bmpr1b and bmpr2.

Its subcellular location is the membrane. It is found in the cytoplasm. It localises to the perinuclear region. The catalysed reaction is O-phospho-L-seryl-[protein] + H2O = L-seryl-[protein] + phosphate. It catalyses the reaction O-phospho-L-threonyl-[protein] + H2O = L-threonyl-[protein] + phosphate. Serine/threonine protein phosphatase that may dephosphorylate and activate lipins. Lipins are phosphatidate phosphatases that catalyze the conversion of phosphatidic acid to diacylglycerol and control the metabolism of fatty acids at different levels. May indirectly modulate the lipid composition of nuclear and/or endoplasmic reticulum membranes and be required for proper nuclear membrane morphology and/or dynamics. May also indirectly regulate the production of lipid droplets and triacylglycerol. Induces neuronal differentiation by antagonizing BMP signaling. Acts both by dephosphorylating BMPR1A and by promoting BMPR2 proteasomal degradation. The protein is CTD nuclear envelope phosphatase 1 (ctdnep1) of Xenopus tropicalis (Western clawed frog).